Reading from the N-terminus, the 610-residue chain is MTETDLITVGENTDDTELTNAVTTDTPDVKATAATVSLGSLSTMVLPELRALANQAGVKGTSGMRKSELIAAIEECRGQANGTSVNDGPSRDHGGSATAISTEALAAQEEQNYAIVEVSRRERRGASREADVTAGTSTAEATESDCQGTADDDTRTLQGGQSDTKTEERGPDVGNDQGVEQQSSSLQPRGDDDGEGRQGRRGRRFRDRDRRRRGERSGDGAEAELRQDDVVQPVAGILDVLDNYAFVRTSGYLAGPHDVYVSMSMVRKNGLRRGDAVTGAVRVPREGEQGHQRQKFNPLVRLDSINGGSVEDAKKRPEFGKLTPLYPNQRLRLETTPDRLTTRVIDLIMPIGKGQRALIVSPPKAGKTTILQDIANAITRNNLECHLMVVLVDERPEEVTDMQRSVKGEVIASTFDRPPSDHTSVAELAIERAKRLVEQGKDVVVLLDSITRLGRAYNNASPASGRILSGGVDSTALYPPKRFLGAARNIEEGGSLTIIATAMVETGSTGDMVIFEEFKGTGNAELKLDRKIAERRVFPAVDVNPSGTRKDELLLSPDEFGIVHKLRRVLSGLDSHQAIDLLMSQLRKTKTNYEFLVQVSKTTPGSMDDD.

The interval 117–227 (EVSRRERRGA…GDGAEAELRQ (111 aa)) is disordered. Residues 118 to 131 (VSRRERRGASREAD) show a composition bias toward basic and acidic residues. Residues 178 to 187 (GVEQQSSSLQ) are compositionally biased toward polar residues. Residues 189–198 (RGDDDGEGRQ) are compositionally biased toward basic and acidic residues. The segment covering 199 to 214 (GRRGRRFRDRDRRRRG) has biased composition (basic residues). Basic and acidic residues predominate over residues 215–227 (ERSGDGAEAELRQ). Residues 231–309 (VQPVAGILDV…VRLDSINGGS (79 aa)) form the Rho RNA-BD domain. ATP-binding positions include 352-357 (GKGQRA), 364-369 (KAGKTT), and arginine 395.

The protein belongs to the Rho family. In terms of assembly, homohexamer. The homohexamer assembles into an open ring structure.

Facilitates transcription termination by a mechanism that involves Rho binding to the nascent RNA, activation of Rho's RNA-dependent ATPase activity, and release of the mRNA from the DNA template. This is Transcription termination factor Rho from Mycobacterium leprae (strain TN).